Consider the following 242-residue polypeptide: UPF0309 protein Oant_1457 (242 aa).

The SIS domain maps to 30–214; that stretch reads AAELITAAAL…AKLVGKGDAP (185 aa).

It belongs to the UPF0309 family.

This Brucella anthropi (strain ATCC 49188 / DSM 6882 / CCUG 24695 / JCM 21032 / LMG 3331 / NBRC 15819 / NCTC 12168 / Alc 37) (Ochrobactrum anthropi) protein is UPF0309 protein Oant_1457.